Reading from the N-terminus, the 461-residue chain is Phosphatidate cytidylyltransferase 1 (461 aa).

The disordered stretch occupies residues Met1–Thr68. Position 7 is an omega-N-methylarginine (Arg7). Over residues Arg22 to Ser56 the composition is skewed to basic and acidic residues. A phosphoserine mark is found at Ser35 and Ser37. A run of 6 helical transmembrane segments spans residues Met96–Leu116, Phe149–Phe169, His183–Val203, Leu230–Ile250, Gly279–Ser299, and Ile357–Phe377.

The protein belongs to the CDS family. In terms of assembly, homodimer. Interacts with FOS; this interaction may enhance catalytic activity. Mg(2+) serves as cofactor. In terms of tissue distribution, expressed in adult brain, eye, smooth muscle and testis. Highly expressed in the inner segment of the photoreceptor layer of adult retina.

It localises to the endoplasmic reticulum membrane. It carries out the reaction a 1,2-diacyl-sn-glycero-3-phosphate + CTP + H(+) = a CDP-1,2-diacyl-sn-glycerol + diphosphate. The catalysed reaction is 1-octadecanoyl-2-(5Z,8Z,11Z,14Z-eicosatetraenoyl)-sn-glycero-3-phosphate + CTP + H(+) = 1-octadecanoyl-2-(5Z,8Z,11Z,14Z-eicosatetraenoyl)-sn-glycero-3-cytidine-5'-diphosphate + diphosphate. It catalyses the reaction 1-octadecanoyl-2-(9Z,12Z-octadecadienoyl)-sn-glycero-3-phosphate + CTP + H(+) = 1-octadecanoyl-2-(9Z,12Z-octadecadienoyl)-sn-glycero-3-cytidine-5'-diphosphate + diphosphate. The enzyme catalyses 1-hexadecanoyl-2-(5Z,8Z,11Z,14Z-eicosatetraenoyl)-sn-glycero-3-phosphate + CTP + H(+) = 1-hexadecanoyl-2-(5Z,8Z,11Z,14Z-eicosatetraenoyl)-sn-glycero-3-cytidine-5'-diphosphate + diphosphate. It carries out the reaction 1,2-di-(5Z,8Z,11Z,14Z)-eicosatetraenoyl-sn-glycero-3-phosphate + CTP + H(+) = 1,2-di-(5Z,8Z,11Z,14Z-eicosatetraenoyl)-sn-glycero-3-cytidine-5'-diphosphate + diphosphate. The catalysed reaction is 1-octadecanoyl-2-(9Z-octadecenoyl)-sn-glycero-3-phosphate + CTP + H(+) = 1-octadecanoyl-2-(9Z-octadecenoyl)-sn-glycero-3-cytidine-5'-diphosphate + diphosphate. It catalyses the reaction 1-octadecanoyl-2-(4Z,7Z,10Z,13Z,16Z,19Z-docosahexaenoyl)-sn-glycero-3-phosphate + CTP + H(+) = 1-octadecanoyl-2-(4Z,7Z,10Z,13Z,16Z,19Z-docosahexaenoyl)-sn-glycero-3-cytidine-5'-diphosphate + diphosphate. The enzyme catalyses 1,2-di-(9Z,12Z-octadecadienoyl)-sn-glycero-3-phosphate + CTP + H(+) = 1,2-di-(9Z,12Z-octadecadienoyl)-sn-glycero-3-cytidine-5'-diphosphate + diphosphate. It carries out the reaction 1,2-di-(9Z-octadecenoyl)-sn-glycero-3-phosphate + CTP + H(+) = 1,2-di-(9Z-octadecenoyl)-sn-glycero-3-cytidine-5'-diphosphate + diphosphate. It participates in phospholipid metabolism; CDP-diacylglycerol biosynthesis; CDP-diacylglycerol from sn-glycerol 3-phosphate: step 3/3. Functionally, catalyzes the conversion of phosphatidic acid (PA) to CDP-diacylglycerol (CDP-DAG), an essential intermediate in the synthesis of phosphatidylglycerol, cardiolipin and phosphatidylinositol. Exhibits almost no acyl chain preference for PA, showing no discrimination for the sn-1/sn-2 acyl chain composition of PAs. Plays an important role in regulating the growth of lipid droplets which are storage organelles at the center of lipid and energy homeostasis. Positively regulates the differentiation and development of adipocytes. In Mus musculus (Mouse), this protein is Phosphatidate cytidylyltransferase 1.